Reading from the N-terminus, the 165-residue chain is Ubiquitin-fold modifier-conjugating enzyme 1 (165 aa).

The Glycyl thioester intermediate role is filled by Cys-117.

The protein belongs to the ubiquitin-conjugating enzyme family. UFC1 subfamily.

Its function is as follows. E2-like enzyme which forms an intermediate with UFM1 via a thioester linkage. The chain is Ubiquitin-fold modifier-conjugating enzyme 1 from Brugia malayi (Filarial nematode worm).